The sequence spans 136 residues: Large ribosomal subunit protein uL16 (136 aa).

Belongs to the universal ribosomal protein uL16 family. As to quaternary structure, part of the 50S ribosomal subunit.

Functionally, binds 23S rRNA and is also seen to make contacts with the A and possibly P site tRNAs. The chain is Large ribosomal subunit protein uL16 from Elusimicrobium minutum (strain Pei191).